The chain runs to 332 residues: 2,7-dihydroxy-5-methyl-1-naphthoate 7-O-methyltransferase (332 aa).

R11 is a substrate binding site. S-adenosyl-L-methionine-binding positions include W133, H153, 175–179 (DVGGG), G177, D200, 227–228 (SF), and 242–243 (SA). Residue H246 is the Proton acceptor of the active site. Residue D247 coordinates substrate.

The protein belongs to the class I-like SAM-binding methyltransferase superfamily. Cation-independent O-methyltransferase family.

The catalysed reaction is 2,7-dihydroxy-5-methyl-1-naphthoate + S-adenosyl-L-methionine = 2-hydroxy-7-methoxy-5-methyl-1-naphthoate + S-adenosyl-L-homocysteine + H(+). The protein operates within antibiotic biosynthesis. Its function is as follows. S-adenosyl-L-methionine-dependent O-methyltransferase that catalyzes regiospecific methylation at the 7-hydroxy group of 2,7-dihydroxy-5-methyl-1-naphthoate in the biosynthesis of the naphthoate moiety of the neocarzinostatin chromophore. Also recognizes other dihydroxynaphthoate as substrates and catalyzes their regiospecific O-methylation. The carboxylate and its ortho-hydroxy groups of the substrate appear to be crucial for NcsB1 substrate recognition and binding, and O-methylation takes place only at the free hydroxy group of these dihydroxynaphthoic acids. The protein is 2,7-dihydroxy-5-methyl-1-naphthoate 7-O-methyltransferase of Streptomyces carzinostaticus.